Reading from the N-terminus, the 264-residue chain is Catenin delta-2 (264 aa).

ARM repeat units lie at residues 20–59 (NKIKAEIRRQGGIQLLVDLLDHRMTEVHRSACGALRNLVY), 64–104 (DDNK…NLSS), 120–162 (LTNA…NVSS), and 166–211 (EARR…NLSY). The disordered stretch occupies residues 238–264 (GKDAESSGCWGKKKKKKKSQDQWDGVG).

It belongs to the beta-catenin family. In terms of assembly, binds to E-cadherin at a juxtamembrane site within the cytoplasmic domain. Binds to PSEN1. Interacts with ZBTB33. Interacts with ARHGEF28. Interacts (via the extreme C-terminus) with FRMPD2 (via the PDZ 2 domain). Interacts with PDZD2. Interacts with CDK5. Interacts with CTNBB1. Interacts with GSK3A and GSK3B. Interacts with DNM2. Interacts with CCDC85B. Post-translationally, O-glycosylated. Phosphorylated by CDK5. Phosphorylated by GSK3B. Predominantly expressed in brain; accumulates in cortical neurons (at protein level).

It is found in the nucleus. The protein localises to the cell junction. Its subcellular location is the adherens junction. It localises to the cell projection. The protein resides in the dendrite. It is found in the perikaryon. Functionally, has a critical role in neuronal development, particularly in the formation and/or maintenance of dendritic spines and synapses. Involved in the regulation of canonical Wnt signaling. It probably acts on beta-catenin turnover, facilitating beta-catenin interaction with GSK3B, phosphorylation, ubiquitination and degradation. May be involved in neuronal cell adhesion and tissue morphogenesis and integrity by regulating adhesion molecules. Functions as a transcriptional activator when bound to ZBTB33. The sequence is that of Catenin delta-2 (Ctnnd2) from Rattus norvegicus (Rat).